Reading from the N-terminus, the 179-residue chain is Large ribosomal subunit protein uL5 (179 aa).

Belongs to the universal ribosomal protein uL5 family. Part of the 50S ribosomal subunit; part of the 5S rRNA/L5/L18/L25 subcomplex. Contacts the 5S rRNA and the P site tRNA. Forms a bridge to the 30S subunit in the 70S ribosome.

In terms of biological role, this is one of the proteins that bind and probably mediate the attachment of the 5S RNA into the large ribosomal subunit, where it forms part of the central protuberance. In the 70S ribosome it contacts protein S13 of the 30S subunit (bridge B1b), connecting the 2 subunits; this bridge is implicated in subunit movement. Contacts the P site tRNA; the 5S rRNA and some of its associated proteins might help stabilize positioning of ribosome-bound tRNAs. This chain is Large ribosomal subunit protein uL5, found in Syntrophus aciditrophicus (strain SB).